Reading from the N-terminus, the 144-residue chain is Deoxyuridine 5'-triphosphate nucleotidohydrolase (144 aa).

The dUMP site is built by Ser-66, Arg-133, Phe-138, and Gly-139.

The protein belongs to the dUTPase family. Homotrimer. Requires Mg(2+) as cofactor.

The enzyme catalyses dUTP + H2O = dUMP + diphosphate + H(+). It participates in pyrimidine metabolism; dUMP biosynthesis; dUMP from dCTP (dUTP route): step 2/2. Functionally, involved in nucleotide metabolism via production of dUMP, the immediate precursor of thymidine nucleotides, and decreases the intracellular concentration of dUTP so that uracil cannot be incorporated into DNA. The protein is Deoxyuridine 5'-triphosphate nucleotidohydrolase (DUT1) of Encephalitozoon cuniculi (strain GB-M1) (Microsporidian parasite).